Here is a 181-residue protein sequence, read N- to C-terminus: ATP synthase subunit b 2 (181 aa).

The segment covering 1–18 (MATTTHDAGHGAAEAAHG) has biased composition (low complexity). The segment at 1–20 (MATTTHDAGHGAAEAAHGSS) is disordered. A helical transmembrane segment spans residues 34-54 (IFWLLVTLVVIYLILSRIALP).

Belongs to the ATPase B chain family. F-type ATPases have 2 components, F(1) - the catalytic core - and F(0) - the membrane proton channel. F(1) has five subunits: alpha(3), beta(3), gamma(1), delta(1), epsilon(1). F(0) has three main subunits: a(1), b(2) and c(10-14). The alpha and beta chains form an alternating ring which encloses part of the gamma chain. F(1) is attached to F(0) by a central stalk formed by the gamma and epsilon chains, while a peripheral stalk is formed by the delta and b chains.

The protein localises to the cell inner membrane. In terms of biological role, f(1)F(0) ATP synthase produces ATP from ADP in the presence of a proton or sodium gradient. F-type ATPases consist of two structural domains, F(1) containing the extramembraneous catalytic core and F(0) containing the membrane proton channel, linked together by a central stalk and a peripheral stalk. During catalysis, ATP synthesis in the catalytic domain of F(1) is coupled via a rotary mechanism of the central stalk subunits to proton translocation. Component of the F(0) channel, it forms part of the peripheral stalk, linking F(1) to F(0). The b'-subunit is a diverged and duplicated form of b found in plants and photosynthetic bacteria. The polypeptide is ATP synthase subunit b 2 (atpF2) (Ruegeria sp. (strain TM1040) (Silicibacter sp.)).